The primary structure comprises 332 residues: Holliday junction branch migration complex subunit RuvB (332 aa).

The large ATPase domain (RuvB-L) stretch occupies residues 1-181 (MTRFLDSDAM…FGITGHMEYY (181 aa)). Residues Leu-20, Arg-21, Gly-62, Lys-65, Thr-66, Thr-67, 128–130 (EDF), Arg-171, Tyr-181, and Arg-218 contribute to the ATP site. Thr-66 contacts Mg(2+). The small ATPAse domain (RuvB-S) stretch occupies residues 182 to 252 (EENDLTEIIE…ITDKALTMLD (71 aa)). The head domain (RuvB-H) stretch occupies residues 255 to 332 (HEGLDYVDQK…EHLGYQRFDK (78 aa)). The DNA site is built by Arg-291, Arg-310, Arg-312, and Arg-315.

Belongs to the RuvB family. Homohexamer. Forms an RuvA(8)-RuvB(12)-Holliday junction (HJ) complex. HJ DNA is sandwiched between 2 RuvA tetramers; dsDNA enters through RuvA and exits via RuvB. An RuvB hexamer assembles on each DNA strand where it exits the tetramer. Each RuvB hexamer is contacted by two RuvA subunits (via domain III) on 2 adjacent RuvB subunits; this complex drives branch migration. In the full resolvosome a probable DNA-RuvA(4)-RuvB(12)-RuvC(2) complex forms which resolves the HJ.

It is found in the cytoplasm. The enzyme catalyses ATP + H2O = ADP + phosphate + H(+). Functionally, the RuvA-RuvB-RuvC complex processes Holliday junction (HJ) DNA during genetic recombination and DNA repair, while the RuvA-RuvB complex plays an important role in the rescue of blocked DNA replication forks via replication fork reversal (RFR). RuvA specifically binds to HJ cruciform DNA, conferring on it an open structure. The RuvB hexamer acts as an ATP-dependent pump, pulling dsDNA into and through the RuvAB complex. RuvB forms 2 homohexamers on either side of HJ DNA bound by 1 or 2 RuvA tetramers; 4 subunits per hexamer contact DNA at a time. Coordinated motions by a converter formed by DNA-disengaged RuvB subunits stimulates ATP hydrolysis and nucleotide exchange. Immobilization of the converter enables RuvB to convert the ATP-contained energy into a lever motion, pulling 2 nucleotides of DNA out of the RuvA tetramer per ATP hydrolyzed, thus driving DNA branch migration. The RuvB motors rotate together with the DNA substrate, which together with the progressing nucleotide cycle form the mechanistic basis for DNA recombination by continuous HJ branch migration. Branch migration allows RuvC to scan DNA until it finds its consensus sequence, where it cleaves and resolves cruciform DNA. In Streptococcus agalactiae serotype Ia (strain ATCC 27591 / A909 / CDC SS700), this protein is Holliday junction branch migration complex subunit RuvB.